Consider the following 583-residue polypeptide: Fumarate reductase flavoprotein subunit (583 aa).

FAD contacts are provided by residues 11-15, 35-37, 43-51, 155-157, and aspartate 211; these read GGGGA, VSK, SHTVSAEGG, and WFA. Position 44 is a tele-8alpha-FAD histidine (histidine 44). Residues histidine 232 and arginine 248 contribute to the active site. FAD contacts are provided by residues 353-354, glutamate 377, and 388-394; these read HY and RLGSNSL.

The protein belongs to the FAD-dependent oxidoreductase 2 family. FRD/SDH subfamily. Part of an enzyme complex containing four subunits: a flavoprotein (FrdA), an iron-sulfur protein (FrdB), and two hydrophobic anchor proteins (FrdC and FrdD). FAD is required as a cofactor.

It is found in the cell membrane. The enzyme catalyses a quinone + succinate = fumarate + a quinol. It catalyses the reaction a menaquinone + succinate = a menaquinol + fumarate. The polypeptide is Fumarate reductase flavoprotein subunit (frdA) (Mycobacterium tuberculosis (strain CDC 1551 / Oshkosh)).